Here is a 395-residue protein sequence, read N- to C-terminus: Altered inheritance of mitochondria protein 39, mitochondrial (395 aa).

Residues 156–176 traverse the membrane as a helical segment; that stretch reads QIWSAIFGGIFGVILGYSLIY.

Belongs to the AIM39 family.

The protein resides in the mitochondrion membrane. In Saccharomyces cerevisiae (strain JAY291) (Baker's yeast), this protein is Altered inheritance of mitochondria protein 39, mitochondrial (AIM39).